A 139-amino-acid chain; its full sequence is Ribosome-binding factor A (139 aa).

This sequence belongs to the RbfA family. As to quaternary structure, monomer. Binds 30S ribosomal subunits, but not 50S ribosomal subunits or 70S ribosomes.

It is found in the cytoplasm. Functionally, one of several proteins that assist in the late maturation steps of the functional core of the 30S ribosomal subunit. Associates with free 30S ribosomal subunits (but not with 30S subunits that are part of 70S ribosomes or polysomes). Required for efficient processing of 16S rRNA. May interact with the 5'-terminal helix region of 16S rRNA. This chain is Ribosome-binding factor A, found in Methylobacterium sp. (strain 4-46).